The sequence spans 85 residues: Turripeptide PaIAa (85 aa).

Belongs to the turripeptide family. As to expression, expressed by the venom duct.

The protein resides in the secreted. Functionally, is lethal to drosophila larvae. The sequence is that of Turripeptide PaIAa from Polystira albida (White giant-turris).